Here is a 97-residue protein sequence, read N- to C-terminus: Protein GLUTAMINE DUMPER 7 (97 aa).

The Extracellular segment spans residues 1 to 25 (MSLHRDSMVPVNSRLENMDSPILSK). A helical membrane pass occupies residues 26 to 46 (ICAWGVMLGLFALSLFAMAYA). The Cytoplasmic segment spans residues 47–97 (CYHKQTSNSCIEEKQGKKQVLKPLDMEPKIVVIMAGNENPTFFAKPTQINA). The VIMAG motif lies at 78-82 (VIMAG).

The protein belongs to the GLUTAMINE DUMPER 1 (TC 9.B.60) family. Expressed in the vascular tissues, even in the minor veins of the leaves.

The protein localises to the membrane. Probable subunit of an amino acid transporter involved in the regulation of the amino acid metabolism. Stimulates amino acid export by activating nonselective amino acid facilitators. The chain is Protein GLUTAMINE DUMPER 7 (GDU7) from Arabidopsis thaliana (Mouse-ear cress).